We begin with the raw amino-acid sequence, 2147 residues long: MNSIHKQHYTINSNHYNESININSLLLNDLNDEKRTTSTNNKSNNNSNNNNNETLEDIIEFNNNNCNGDMKYLDLSKRMIYSLELMMIPEIENRFQGDFKSISILNLNDNLLGEIPESLKQLTQLISLSIRGNHILEIPLWFPEEFKLLRKLDVSHNAISSVPNTFNKFSILEDLNLSNNYISYIHPSLFPEGIMRLNLSNNLFREVELPPWFESLLTLDISGNKLKHLGNLPFHLVRVSIDDNHLESIDHKVILRNKDLALKFNQSFSDIVLERIYQCWYTGDPVLDLSGLGMCVVPPILGMLVHLTHLDLSGNCISVLPPELANLTELVRLDLSFNILTTLPLYIVSYKRLEHLDLQGTLDTLVSPPRRIAETGKLIDIQRYFHDLFQGEPSYRVKLMIVGQENVGKTSLVKCLKMKKKFSKNSDHLGTNVSTDGIDIDEIKFNLDIELPSNPSSNSLISNSLSNSSISSNNINSNNNINVHSNGGGINSNGVNSNSQININSSSGNIHSNGGGVGNVNSSGGIHSNNSSGGGGGSNSFLNNTNSNGTNNNSSNLNINTNSNNVNSSGGGNNYHPPVGTNTSMSNIQVIGSSGSNLGSGSNLSIGGSNGNNNNNSGGSGTMVNQRVTMSIWDCAGQELYYTSHQMFLTDSALYVVVWNLCKPEVNSRVEFWLHSIRSKAENAPILLIGTHLDDYLATHSESELDEILENIYSKYFRKFRLKGISILSCSTGVGFDNFLDLLKKTVVELPSLKQSLPELYLKLEKLIIKKRSTLVPPVLTWQSFSQMVLSNLDFHDEIHVKVATKALVPLGSISFFDEPGLDQYVFLDPQWLTGVFSSIITTKHKFIKDGVLKKSDLYQIWKPPHFIEDEGLHSLLINLLERFELMFPLDSDLVSLSSSNGNNGNSYVNNNNNNNNNSNNNNNGSNKSSPFKTTPSSPSTLRLVDSKSKGSHSSNPILSGNNSSSKNSTSTKRSISGSPLRSRSNSDLDLIGGGGGSPINGSSIDYSSKSNTLTPGLFNELNQKFIIPSQLPEIRPSFGLLWPSLDHSRVEFNRWIQLSFAPAGLFSRLLIRLLISKEFDMKPILYWRNGVVVESQSGKSFLSTSTALIEMVPSYANCSSTIKISVRGDRRTGRGLSAKLLRLIVEIADTLCTSWYHLETNQVIPCPHCINKPNCTLFSLSDCEAVASSGVWYLLCGDRKINFETFVPDVAMSDFWGSGSKKFNYDQIKMHKEKRILSIKPASFGNNQIQFEVRVPPSPPPPPVQQIINNGADDNITTTTLAVNNIKVLESGGSQPPSPRSGKDVTHELPIINRLEIIQPTSDESSLIQVEFDHNNQTLVISGTYKYGDLLEIEFESPKLIGRGASGKIYRANLNDTMVAVKQLEVVGEDAPRIFSEFRREIHVMSDLKHSNVVNLLGFTLSPFTMVMEYIDCGDLHKFLHSPIGDQLNGNWALILKLALDIAKGMEFLHSVTPPLLHRDLKSPNVLLSMKDGVYTAKVGDFGLSSRMFIQALKHKLRNFPVGNITWVAPEILREEEYTVKSDVYAFGLILHELLTRKHPYREFNYSMVSLQEDAIKNGLRPTISPSYTQTVTGHEYCGLIQDCWDSDIDRRPTFNKIVKRIKQIIGRDVNNILMVNGVSVVSGIQSPNSLADSQPFHYHQQQQPSLNSTNQLQQQQYSSVLTSPRSNLSDSSNSSQNIANKSLNNISATSLGDLGGNDENLGGQLQYSMRVPQPEAKVNQLVWEVNSRRVWGGCESGEIIVWNAENGNQIFREQKLHPGPIRSLALVNQEDIWSAGGIGPQQSTIRIWNAWRFNLDDQSGTKSDFITKKGRGGSTFGRKSWRLRWFVLSRFDKTLKYYSKQTDKEPSCSLILEGAWLEEISPPGYKVSLHLIHPEKRTMEMEFKSESEKSSWLTAINRVINQNIPLYEIALGKQMTSGSENDYITNLLSVGPNVWVSLKETPSILVYNVKSKELVTKISLNDDQSSDQWGKTGAVNMMLVNNFVWITGGSKLTQIDSQSYQLLEVHGNHYSKPITSMALVEKNVWISCEDESLSVWDGDTGSFIRKVGSPIGSPTKPTVYTKLLYFSGYVWACTQGSIHIYCIHSLTCKKKVESKNHPNSIVDLIKVFQQTVWSCCGTNNVCIWS.

Topologically, residues 1–1055 (MNSIHKQHYT…LDHSRVEFNR (1055 aa)) are extracellular. 11 LRR repeats span residues 69–89 (DMKYLDLSKRMIYSLELMMIP), 101–122 (SISILNLNDNLLGEIPESLKQL), 124–145 (QLISLSIRGNHILEIPLWFPEE), 148–169 (LLRKLDVSHNAISSVPNTFNKF), 171–192 (ILEDLNLSNNYISYIHPSLFPE), 193–214 (GIMRLNLSNNLFREVELPPWFE), 215–236 (SLLTLDISGNKLKHLGNLPFHL), 237–256 (VRVSIDDNHLESIDHKVILR), 306–328 (HLTHLDLSGNCISVLPPELANLT), 329–350 (ELVRLDLSFNILTTLPLYIVSY), and 352–372 (RLEHLDLQGTLDTLVSPPRRI). The 361-residue stretch at 390–750 (QGEPSYRVKL…DLLKKTVVEL (361 aa)) folds into the Roc domain. The small GTPase-like stretch occupies residues 390-750 (QGEPSYRVKL…DLLKKTVVEL (361 aa)). Residue 403-410 (GQENVGKT) participates in GTP binding. 2 disordered regions span residues 491 to 582 (NSNG…VGTN) and 602 to 621 (SNLSIGGSNGNNNNNSGGSG). Composition is skewed to low complexity over residues 492–512 (SNGVNSNSQININSSSGNIHS), 519–531 (NVNSSGGIHSNNS), 539–568 (NSFLNNTNSNGTNNNSSNLNINTNSNNVNS), and 602–617 (SNLSIGGSNGNNNNNS). Residues 634–638 (DCAGQ) and 691–694 (THLD) contribute to the GTP site. The region spanning 758-892 (PELYLKLEKL…RFELMFPLDS (135 aa)) is the COR domain. Low complexity-rich tracts occupy residues 905 to 941 (GNSYVNNNNNNNNNSNNNNNGSNKSSPFKTTPSSPST) and 960 to 977 (SGNNSSSKNSTSTKRSIS). The disordered stretch occupies residues 905–995 (GNSYVNNNNN…NSDLDLIGGG (91 aa)). The stretch at 1051–1098 (VEFNRWIQLSFAPAGLFSRLLIRLLISKEFDMKPILYWRNGVVVESQS) is one WD 1 repeat. The helical transmembrane segment at 1056–1076 (WIQLSFAPAGLFSRLLIRLLI) threads the bilayer. At 1077–2147 (SKEFDMKPIL…CGTNNVCIWS (1071 aa)) the chain is on the cytoplasmic side. LRR repeat units follow at residues 1237–1263 (ILSIKPASFGNNQIQFEVRVPPSPPPP), 1274–1297 (DDNITTTTLAVNNIKVLESGGSQP), and 1325–1348 (ESSLIQVEFDHNNQTLVISGTYKY). The Protein kinase domain occupies 1356-1627 (FESPKLIGRG…KIVKRIKQII (272 aa)). Residues 1362–1370 (IGRGASGKI) and Lys1383 each bind ATP. Asp1481 functions as the Proton acceptor in the catalytic mechanism. The tract at residues 1653 to 1699 (ADSQPFHYHQQQQPSLNSTNQLQQQQYSSVLTSPRSNLSDSSNSSQN) is disordered. Over residues 1662 to 1699 (QQQQPSLNSTNQLQQQQYSSVLTSPRSNLSDSSNSSQN) the composition is skewed to low complexity. WD repeat units follow at residues 1735-1774 (QPEAKVNQLVWEVNSRRVWGGCESGEIIVWNAENGNQIFR) and 1778-1820 (LHPG…LDDQ). The 103-residue stretch at 1821 to 1923 (SGTKSDFITK…WLTAINRVIN (103 aa)) folds into the PH domain. A WD 4 repeat occupies 2031–2068 (HYSKPITSMALVEKNVWISCEDESLSVWDGDTGSFIRK).

Belongs to the protein kinase superfamily. TKL Ser/Thr protein kinase family. ROCO subfamily.

The protein localises to the membrane. The catalysed reaction is L-seryl-[protein] + ATP = O-phospho-L-seryl-[protein] + ADP + H(+). It catalyses the reaction L-threonyl-[protein] + ATP = O-phospho-L-threonyl-[protein] + ADP + H(+). May act as a serine/threonine-protein kinase and guanine-nucleotide releasing factor. This Dictyostelium discoideum (Social amoeba) protein is Probable serine/threonine-protein kinase roco6 (roco6).